A 207-amino-acid polypeptide reads, in one-letter code: ATP synthase subunit b 2 (207 aa).

Residues 58–78 (LLWLVITFGVFYLLMQKVIAP) traverse the membrane as a helical segment.

This sequence belongs to the ATPase B chain family. In terms of assembly, F-type ATPases have 2 components, F(1) - the catalytic core - and F(0) - the membrane proton channel. F(1) has five subunits: alpha(3), beta(3), gamma(1), delta(1), epsilon(1). F(0) has three main subunits: a(1), b(2) and c(10-14). The alpha and beta chains form an alternating ring which encloses part of the gamma chain. F(1) is attached to F(0) by a central stalk formed by the gamma and epsilon chains, while a peripheral stalk is formed by the delta and b chains.

It localises to the cell inner membrane. In terms of biological role, f(1)F(0) ATP synthase produces ATP from ADP in the presence of a proton or sodium gradient. F-type ATPases consist of two structural domains, F(1) containing the extramembraneous catalytic core and F(0) containing the membrane proton channel, linked together by a central stalk and a peripheral stalk. During catalysis, ATP synthesis in the catalytic domain of F(1) is coupled via a rotary mechanism of the central stalk subunits to proton translocation. Component of the F(0) channel, it forms part of the peripheral stalk, linking F(1) to F(0). The b'-subunit is a diverged and duplicated form of b found in plants and photosynthetic bacteria. The protein is ATP synthase subunit b 2 (atpF2) of Rhizobium johnstonii (strain DSM 114642 / LMG 32736 / 3841) (Rhizobium leguminosarum bv. viciae).